The following is a 408-amino-acid chain: LL-diaminopimelate aminotransferase (408 aa).

The substrate site is built by Tyr15 and Gly42. Pyridoxal 5'-phosphate is bound by residues Tyr72, 108 to 109 (SK), Tyr132, Asn187, Tyr218, and 246 to 248 (SFS). Positions 109, 132, and 187 each coordinate substrate. Residue Lys249 is modified to N6-(pyridoxal phosphate)lysine. Pyridoxal 5'-phosphate-binding residues include Arg257 and Asn291. Asn291 and Arg387 together coordinate substrate.

The protein belongs to the class-I pyridoxal-phosphate-dependent aminotransferase family. LL-diaminopimelate aminotransferase subfamily. In terms of assembly, homodimer. The cofactor is pyridoxal 5'-phosphate.

The catalysed reaction is (2S,6S)-2,6-diaminopimelate + 2-oxoglutarate = (S)-2,3,4,5-tetrahydrodipicolinate + L-glutamate + H2O + H(+). Its pathway is amino-acid biosynthesis; L-lysine biosynthesis via DAP pathway; LL-2,6-diaminopimelate from (S)-tetrahydrodipicolinate (aminotransferase route): step 1/1. Functionally, involved in the synthesis of meso-diaminopimelate (m-DAP or DL-DAP), required for both lysine and peptidoglycan biosynthesis. Catalyzes the direct conversion of tetrahydrodipicolinate to LL-diaminopimelate. The polypeptide is LL-diaminopimelate aminotransferase (Prochlorococcus marinus (strain NATL2A)).